We begin with the raw amino-acid sequence, 268 residues long: Hydroxyethylthiazole kinase (268 aa).

A substrate-binding site is contributed by methionine 45. Arginine 121 and threonine 167 together coordinate ATP. Position 194 (glycine 194) interacts with substrate.

This sequence belongs to the Thz kinase family. Requires Mg(2+) as cofactor.

The catalysed reaction is 5-(2-hydroxyethyl)-4-methylthiazole + ATP = 4-methyl-5-(2-phosphooxyethyl)-thiazole + ADP + H(+). Its pathway is cofactor biosynthesis; thiamine diphosphate biosynthesis; 4-methyl-5-(2-phosphoethyl)-thiazole from 5-(2-hydroxyethyl)-4-methylthiazole: step 1/1. Functionally, catalyzes the phosphorylation of the hydroxyl group of 4-methyl-5-beta-hydroxyethylthiazole (THZ). The sequence is that of Hydroxyethylthiazole kinase from Bacillus cereus (strain ATCC 10987 / NRS 248).